A 212-amino-acid polypeptide reads, in one-letter code: B3 domain-containing protein Os04g0386900 (212 aa).

Positions 1–78 (MRAATALPSI…PRPPEPEPEK (78 aa)) are disordered. Composition is skewed to low complexity over residues 8 to 23 (PSIP…ASDP) and 36 to 46 (DAGAEDPAAVD). The TF-B3 DNA-binding region spans 93–191 (FTCIMCKSHV…EFRVQVLRAE (99 aa)).

The protein resides in the nucleus. This Oryza sativa subsp. japonica (Rice) protein is B3 domain-containing protein Os04g0386900.